The primary structure comprises 113 residues: Teretoxin Tan14.1 (113 aa).

A signal peptide spans M1 to V21. A propeptide spanning residues H22–R86 is cleaved from the precursor.

The protein belongs to the teretoxin N (TN) superfamily. Contains 2 disulfide bonds. As to expression, expressed by the venom duct.

The protein localises to the secreted. The sequence is that of Teretoxin Tan14.1 from Terebra anilis (Auger snail).